The primary structure comprises 444 residues: Cobyrinate a,c-diamide synthase (444 aa).

Positions 250–438 (IIAIAQDRAF…PHIHFFGSYK (189 aa)) constitute a GATase cobBQ-type domain. Residue Cys-332 is the Nucleophile of the active site.

The protein belongs to the CobB/CbiA family. Mg(2+) is required as a cofactor.

It catalyses the reaction cob(II)yrinate + 2 L-glutamine + 2 ATP + 2 H2O = cob(II)yrinate a,c diamide + 2 L-glutamate + 2 ADP + 2 phosphate + 2 H(+). It functions in the pathway cofactor biosynthesis; adenosylcobalamin biosynthesis; cob(II)yrinate a,c-diamide from sirohydrochlorin (anaerobic route): step 10/10. Functionally, catalyzes the ATP-dependent amidation of the two carboxylate groups at positions a and c of cobyrinate, using either L-glutamine or ammonia as the nitrogen source. In Fusobacterium nucleatum subsp. nucleatum (strain ATCC 25586 / DSM 15643 / BCRC 10681 / CIP 101130 / JCM 8532 / KCTC 2640 / LMG 13131 / VPI 4355), this protein is Cobyrinate a,c-diamide synthase.